Here is a 70-residue protein sequence, read N- to C-terminus: Conotoxin Cl6.13 (70 aa).

Positions 1 to 21 are cleaved as a signal peptide; the sequence is MKFPLLFISLALAAFLTRVQD. Positions 22–33 are excised as a propeptide; it reads ADSSVISKEKSV. 3 cysteine pairs are disulfide-bonded: C41/C58, C48/C63, and C57/C68.

As to expression, expressed by the venom duct.

The protein localises to the secreted. The chain is Conotoxin Cl6.13 from Californiconus californicus (California cone).